The sequence spans 447 residues: UPF0210 protein LSL_0162 (447 aa).

It belongs to the UPF0210 family. As to quaternary structure, homodimer.

The chain is UPF0210 protein LSL_0162 from Ligilactobacillus salivarius (strain UCC118) (Lactobacillus salivarius).